The sequence spans 289 residues: MDKVKIALQYMLPKHLLSRLVGKLAAAEAGTLTTAAIKWFIKQYKIDMSEAAQSEPQAYKSFNDFFTRALKPGIRPINQHTNIMVHPVDGAVSQLGPIKEGRIFQAKGHHYSSLTLLGDQVQDAKRFEGGDFATIYLAPKDYHRIHMPIKGTLSKMTYVPGELFSVNPLTARHVPGLFARNERVVAIFETEHGPLAMVLVGATIVASIETVWAGTITPPTGKQVFTWEYPTVGPDAITLDKGDEMGRFKLGSTVVMLFAKDAIDTFAEGVEAEAVTRMGQAFANLNNPK.

Active-site charge relay system; for autoendoproteolytic cleavage activity residues include aspartate 89, histidine 146, and serine 252. Serine 252 acts as the Schiff-base intermediate with substrate; via pyruvic acid; for decarboxylase activity in catalysis. Serine 252 carries the post-translational modification Pyruvic acid (Ser); by autocatalysis.

Belongs to the phosphatidylserine decarboxylase family. PSD-B subfamily. Prokaryotic type I sub-subfamily. Heterodimer of a large membrane-associated beta subunit and a small pyruvoyl-containing alpha subunit. Requires pyruvate as cofactor. In terms of processing, is synthesized initially as an inactive proenzyme. Formation of the active enzyme involves a self-maturation process in which the active site pyruvoyl group is generated from an internal serine residue via an autocatalytic post-translational modification. Two non-identical subunits are generated from the proenzyme in this reaction, and the pyruvate is formed at the N-terminus of the alpha chain, which is derived from the carboxyl end of the proenzyme. The autoendoproteolytic cleavage occurs by a canonical serine protease mechanism, in which the side chain hydroxyl group of the serine supplies its oxygen atom to form the C-terminus of the beta chain, while the remainder of the serine residue undergoes an oxidative deamination to produce ammonia and the pyruvoyl prosthetic group on the alpha chain. During this reaction, the Ser that is part of the protease active site of the proenzyme becomes the pyruvoyl prosthetic group, which constitutes an essential element of the active site of the mature decarboxylase.

It localises to the cell membrane. It carries out the reaction a 1,2-diacyl-sn-glycero-3-phospho-L-serine + H(+) = a 1,2-diacyl-sn-glycero-3-phosphoethanolamine + CO2. The protein operates within phospholipid metabolism; phosphatidylethanolamine biosynthesis; phosphatidylethanolamine from CDP-diacylglycerol: step 2/2. Catalyzes the formation of phosphatidylethanolamine (PtdEtn) from phosphatidylserine (PtdSer). This Shewanella putrefaciens (strain CN-32 / ATCC BAA-453) protein is Phosphatidylserine decarboxylase proenzyme.